Here is a 131-residue protein sequence, read N- to C-terminus: MSWQTYVDEHLLCENEGNHLTSAAIIGQDGTVWAQSANFPQFKPEEITGIMNDFAVPGTLAPTGLYLGGTKYMVIQGEPEAVIRGKKGPGGITIKKTNQALIIGIYDEPMTPGQCNMIVERLGDYLIEQSL.

The protein belongs to the profilin family. Occurs in many kinds of cells as a complex with monomeric actin in a 1:1 ratio.

It localises to the cytoplasm. The protein localises to the cytoskeleton. Binds to actin and affects the structure of the cytoskeleton. At high concentrations, profilin prevents the polymerization of actin, whereas it enhances it at low concentrations. By binding to PIP2, it inhibits the formation of IP3 and DG. In Solanum lycopersicum (Tomato), this protein is Profilin-2.